The sequence spans 86 residues: Large ribosomal subunit protein bL27 (86 aa).

Gly residues predominate over residues 1 to 10 (MAQKKGGGST). A disordered region spans residues 1 to 21 (MAQKKGGGSTRNGRDSESKRL).

This sequence belongs to the bacterial ribosomal protein bL27 family.

In Ralstonia pickettii (strain 12J), this protein is Large ribosomal subunit protein bL27.